We begin with the raw amino-acid sequence, 307 residues long: NADH-ubiquinone oxidoreductase chain 2 (307 aa).

10 helical membrane passes run 1–21 (MTLQ…LSMT), 25–45 (WIII…YYML), 58–78 (YFLI…YIFV), 88–108 (FIFI…FWII), 119–139 (IGIV…HMGC), 144–164 (MLNL…LIGM), 193–213 (LFKY…FLYL), 217–237 (MSIS…LFIG), 250–270 (LWFI…VYYL), and 287–307 (HYKM…LFLT).

The protein belongs to the complex I subunit 2 family.

Its subcellular location is the mitochondrion inner membrane. The catalysed reaction is a ubiquinone + NADH + 5 H(+)(in) = a ubiquinol + NAD(+) + 4 H(+)(out). Core subunit of the mitochondrial membrane respiratory chain NADH dehydrogenase (Complex I) that is believed to belong to the minimal assembly required for catalysis. Complex I functions in the transfer of electrons from NADH to the respiratory chain. The immediate electron acceptor for the enzyme is believed to be ubiquinone. In Albinaria caerulea (Land snail), this protein is NADH-ubiquinone oxidoreductase chain 2 (ND2).